Here is a 980-residue protein sequence, read N- to C-terminus: Protein translocase subunit SecA (980 aa).

ATP is bound by residues glutamine 109, 127 to 131 (GEGKT), and aspartate 529. The disordered stretch occupies residues 954–980 (QKIGRNDPCPCGSGKKYKHCHGKDNPQ). Residues cysteine 962, cysteine 964, cysteine 973, and histidine 974 each coordinate Zn(2+).

Belongs to the SecA family. In terms of assembly, monomer and homodimer. Part of the essential Sec protein translocation apparatus which comprises SecA, SecYEG and auxiliary proteins SecDF. Other proteins may also be involved. Zn(2+) is required as a cofactor.

It is found in the cell inner membrane. It localises to the cytoplasm. The enzyme catalyses ATP + H2O + cellular proteinSide 1 = ADP + phosphate + cellular proteinSide 2.. In terms of biological role, part of the Sec protein translocase complex. Interacts with the SecYEG preprotein conducting channel. Has a central role in coupling the hydrolysis of ATP to the transfer of proteins into and across the cell membrane, serving as an ATP-driven molecular motor driving the stepwise translocation of polypeptide chains across the membrane. In Brachyspira hyodysenteriae (strain ATCC 49526 / WA1), this protein is Protein translocase subunit SecA.